Consider the following 377-residue polypeptide: Endoplasmic reticulum-Golgi intermediate compartment protein 2 (377 aa).

The Cytoplasmic segment spans residues 1–33 (MRRLNRRKTLSLVKELDAFPKVPDSYVETSASG). A helical transmembrane segment spans residues 34-54 (GTVSLIAFTTMALLTIMEFSV). The Lumenal portion of the chain corresponds to 55–319 (YQDTWMKYEY…PFWQFFVRLC (265 aa)). The helical transmembrane segment at 320–340 (GIIGGIFSTTGMLHGIGKFIV) threads the bilayer. Residues 341 to 377 (EIICCRFRLGSYKPVRSVPFADGHTDNHLPLLENNTH) lie on the Cytoplasmic side of the membrane.

Belongs to the ERGIC family. In terms of assembly, may form a heteromeric complex composed of ERGIC1, ERGIC2 and ERGIC3. Interacts with ERGIC3, the interaction is required for the stable expression of both proteins. May interact with EEF1A1.

Its subcellular location is the endoplasmic reticulum-Golgi intermediate compartment membrane. The protein localises to the golgi apparatus. It is found in the cis-Golgi network membrane. It localises to the endoplasmic reticulum membrane. The protein resides in the cytoplasm. Its subcellular location is the nucleus. Its function is as follows. Possible role in transport between endoplasmic reticulum and Golgi. The protein is Endoplasmic reticulum-Golgi intermediate compartment protein 2 (Ergic2) of Mus musculus (Mouse).